Reading from the N-terminus, the 420-residue chain is L-rhamnose isomerase (420 aa).

Mn(2+) contacts are provided by His-264, Asp-296, and Asp-298.

Belongs to the rhamnose isomerase family. It depends on Mn(2+) as a cofactor.

The protein localises to the cytoplasm. The catalysed reaction is L-rhamnopyranose = L-rhamnulose. Its pathway is carbohydrate degradation; L-rhamnose degradation; glycerone phosphate from L-rhamnose: step 1/3. Functionally, catalyzes the interconversion of L-rhamnose and L-rhamnulose. The polypeptide is L-rhamnose isomerase (Listeria monocytogenes serotype 4b (strain CLIP80459)).